The following is a 200-amino-acid chain: dITP/XTP pyrophosphatase (200 aa).

Position 8 to 13 (8 to 13) interacts with substrate; sequence TRNAGK. D72 (proton acceptor) is an active-site residue. D72 provides a ligand contact to Mg(2+). Residues S73, 155–158, K178, and 183–184 each bind substrate; these read FGYD and HR.

It belongs to the HAM1 NTPase family. As to quaternary structure, homodimer. It depends on Mg(2+) as a cofactor.

The enzyme catalyses XTP + H2O = XMP + diphosphate + H(+). It carries out the reaction dITP + H2O = dIMP + diphosphate + H(+). It catalyses the reaction ITP + H2O = IMP + diphosphate + H(+). Functionally, pyrophosphatase that catalyzes the hydrolysis of nucleoside triphosphates to their monophosphate derivatives, with a high preference for the non-canonical purine nucleotides XTP (xanthosine triphosphate), dITP (deoxyinosine triphosphate) and ITP. Seems to function as a house-cleaning enzyme that removes non-canonical purine nucleotides from the nucleotide pool, thus preventing their incorporation into DNA/RNA and avoiding chromosomal lesions. The chain is dITP/XTP pyrophosphatase from Streptomyces avermitilis (strain ATCC 31267 / DSM 46492 / JCM 5070 / NBRC 14893 / NCIMB 12804 / NRRL 8165 / MA-4680).